The chain runs to 126 residues: Protein ApaG (126 aa).

An ApaG domain is found at 2-126 (DVSLPCIKIQ…FRLAVPHVLN (125 aa)).

This Vibrio cholerae serotype O1 (strain ATCC 39541 / Classical Ogawa 395 / O395) protein is Protein ApaG.